We begin with the raw amino-acid sequence, 131 residues long: Large ribosomal subunit protein bL17 (131 aa).

This sequence belongs to the bacterial ribosomal protein bL17 family. As to quaternary structure, part of the 50S ribosomal subunit. Contacts protein L32.

This is Large ribosomal subunit protein bL17 from Bordetella petrii (strain ATCC BAA-461 / DSM 12804 / CCUG 43448).